Here is a 397-residue protein sequence, read N- to C-terminus: Zinc finger transcription factor family protein 30 (397 aa).

The interval 1 to 40 (MKLEDDKIHSPTNTEEEGYGSDVEVENGTDISGSKGGSGV) is disordered. The span at 14–27 (TEEEGYGSDVEVEN) shows a compositional bias: acidic residues. 3 consecutive C2H2-type zinc fingers follow at residues 51–74 (FRCS…MQAH), 78–102 (YKCT…KQHH), and 107–125 (YMCR…LHIH).

It localises to the nucleus. In Caenorhabditis elegans, this protein is Zinc finger transcription factor family protein 30 (ztf-30).